Here is a 428-residue protein sequence, read N- to C-terminus: Dihydroorotase (428 aa).

Residues histidine 59 and histidine 61 each coordinate Zn(2+). Substrate-binding positions include 61–63 (HLR) and asparagine 93. 3 residues coordinate Zn(2+): aspartate 151, histidine 178, and histidine 231. A substrate-binding site is contributed by asparagine 277. Residue aspartate 304 coordinates Zn(2+). Aspartate 304 is an active-site residue. Substrate-binding positions include histidine 308 and 322–323 (FG).

It belongs to the metallo-dependent hydrolases superfamily. DHOase family. Class I DHOase subfamily. Requires Zn(2+) as cofactor.

The enzyme catalyses (S)-dihydroorotate + H2O = N-carbamoyl-L-aspartate + H(+). It functions in the pathway pyrimidine metabolism; UMP biosynthesis via de novo pathway; (S)-dihydroorotate from bicarbonate: step 3/3. Its function is as follows. Catalyzes the reversible cyclization of carbamoyl aspartate to dihydroorotate. In Bacillus cereus (strain ATCC 14579 / DSM 31 / CCUG 7414 / JCM 2152 / NBRC 15305 / NCIMB 9373 / NCTC 2599 / NRRL B-3711), this protein is Dihydroorotase.